Reading from the N-terminus, the 599-residue chain is DNA-directed RNA polymerase III subunit RPC3 (599 aa).

Positions 350–375 (PKKRSASNGDDERPTKKIKTEDSDDI) are disordered. Residues 359–370 (DDERPTKKIKTE) are compositionally biased toward basic and acidic residues. The interval 528 to 549 (LIFSMAEILSNIQAFREDHKIL) is leucine-zipper.

This sequence belongs to the RNA polymerase beta chain family. In terms of assembly, component of the RNA polymerase III (Pol III) complex consisting of 17 subunits.

The protein resides in the nucleus. DNA-dependent RNA polymerase catalyzes the transcription of DNA into RNA using the four ribonucleoside triphosphates as substrates. Specific core component of RNA polymerase III which synthesizes small RNAs, such as 5S rRNA and tRNAs. This is DNA-directed RNA polymerase III subunit RPC3 (RPC82) from Scheffersomyces stipitis (strain ATCC 58785 / CBS 6054 / NBRC 10063 / NRRL Y-11545) (Yeast).